A 273-amino-acid polypeptide reads, in one-letter code: 3-methyl-2-oxobutanoate hydroxymethyltransferase 2 (273 aa).

Mg(2+) is bound by residues Asp50 and Asp89. Residues 50–51 (DS), Asp89, and Lys119 each bind 3-methyl-2-oxobutanoate. Glu121 serves as a coordination point for Mg(2+). The active-site Proton acceptor is the Glu188.

This sequence belongs to the PanB family. In terms of assembly, homodecamer; pentamer of dimers. Requires Mg(2+) as cofactor.

It localises to the cytoplasm. It catalyses the reaction 3-methyl-2-oxobutanoate + (6R)-5,10-methylene-5,6,7,8-tetrahydrofolate + H2O = 2-dehydropantoate + (6S)-5,6,7,8-tetrahydrofolate. It participates in cofactor biosynthesis; (R)-pantothenate biosynthesis; (R)-pantoate from 3-methyl-2-oxobutanoate: step 1/2. Its function is as follows. Catalyzes the reversible reaction in which hydroxymethyl group from 5,10-methylenetetrahydrofolate is transferred onto alpha-ketoisovalerate to form ketopantoate. This chain is 3-methyl-2-oxobutanoate hydroxymethyltransferase 2, found in Zymomonas mobilis subsp. mobilis (strain ATCC 31821 / ZM4 / CP4).